The chain runs to 304 residues: Probable aspartoacylase (304 aa).

2 residues coordinate Zn(2+): His13 and Glu16. Substrate-binding positions include Arg55 and 62 to 63 (NR). A Zn(2+)-binding site is contributed by His105. Substrate is bound by residues Glu163 and Tyr273.

The protein belongs to the AspA/AstE family. Aspartoacylase subfamily. Zn(2+) is required as a cofactor.

It catalyses the reaction an N-acyl-L-aspartate + H2O = a carboxylate + L-aspartate. The protein is Probable aspartoacylase of Prochlorococcus marinus (strain MIT 9313).